The following is a 233-amino-acid chain: Mediator of RNA polymerase II transcription subunit 7 (233 aa).

Residue lysine 185 forms a Glycyl lysine isopeptide (Lys-Gly) (interchain with G-Cter in SUMO1); alternate linkage. A Glycyl lysine isopeptide (Lys-Gly) (interchain with G-Cter in SUMO2); alternate cross-link involves residue lysine 185. The segment at 187-213 is disordered; sequence EPMDADDSNNCTGQNEHQRENSGHRRD. Serine 194 bears the Phosphoserine mark. Residues 202–213 show a composition bias toward basic and acidic residues; it reads EHQRENSGHRRD.

The protein belongs to the Mediator complex subunit 7 family. In terms of assembly, component of the Mediator complex, which is composed of MED1, MED4, MED6, MED7, MED8, MED9, MED10, MED11, MED12, MED13, MED13L, MED14, MED15, MED16, MED17, MED18, MED19, MED20, MED21, MED22, MED23, MED24, MED25, MED26, MED27, MED29, MED30, MED31, CCNC, CDK8 and CDC2L6/CDK11. The MED12, MED13, CCNC and CDK8 subunits form a distinct module termed the CDK8 module. Mediator containing the CDK8 module is less active than Mediator lacking this module in supporting transcriptional activation. Individual preparations of the Mediator complex lacking one or more distinct subunits have been variously termed ARC, CRSP, DRIP, PC2, SMCC and TRAP. Post-translationally, constitutively sumoylated.

It is found in the nucleus. In terms of biological role, component of the Mediator complex, a coactivator involved in the regulated transcription of nearly all RNA polymerase II-dependent genes. Mediator functions as a bridge to convey information from gene-specific regulatory proteins to the basal RNA polymerase II transcription machinery. Mediator is recruited to promoters by direct interactions with regulatory proteins and serves as a scaffold for the assembly of a functional preinitiation complex with RNA polymerase II and the general transcription factors. The protein is Mediator of RNA polymerase II transcription subunit 7 (MED7) of Homo sapiens (Human).